Consider the following 179-residue polypeptide: Large ribosomal subunit protein uL5 (179 aa).

The protein belongs to the universal ribosomal protein uL5 family. Part of the 50S ribosomal subunit; part of the 5S rRNA/L5/L18/L25 subcomplex. Contacts the 5S rRNA and the P site tRNA. Forms a bridge to the 30S subunit in the 70S ribosome.

This is one of the proteins that bind and probably mediate the attachment of the 5S RNA into the large ribosomal subunit, where it forms part of the central protuberance. In the 70S ribosome it contacts protein S13 of the 30S subunit (bridge B1b), connecting the 2 subunits; this bridge is implicated in subunit movement. Contacts the P site tRNA; the 5S rRNA and some of its associated proteins might help stabilize positioning of ribosome-bound tRNAs. The chain is Large ribosomal subunit protein uL5 from Rhodospirillum rubrum (strain ATCC 11170 / ATH 1.1.1 / DSM 467 / LMG 4362 / NCIMB 8255 / S1).